A 265-amino-acid chain; its full sequence is F-box only protein 6 (265 aa).

One can recognise an F-box domain in the interval 3–50 (LVSINQLPENILLEVFMHVPARQLLRNCRPVCCLWRDLIDLVSLWKRK). An FBA domain is found at 71-252 (FYFLCSLRRN…VTNSSVVISH (182 aa)). Residue serine 251 is modified to Phosphoserine.

In terms of assembly, part of a SCF (SKP1-cullin-F-box) protein ligase complex. Interacts with VCP, CHEK1 and CUL1.

The protein resides in the cytoplasm. Its pathway is protein modification; protein ubiquitination. Functionally, substrate-recognition component of some SCF (SKP1-CUL1-F-box protein)-type E3 ubiquitin ligase complexes. Involved in endoplasmic reticulum-associated degradation pathway (ERAD) for misfolded lumenal proteins by recognizing and binding sugar chains on unfolded glycoproteins that are retrotranslocated into the cytosol and promoting their ubiquitination and subsequent degradation. Able to recognize and bind denatured glycoproteins, which are modified with not only high-mannose but also complex-type oligosaccharides. Also recognizes sulfated glycans. Also involved in DNA damage response by specifically recognizing activated CHEK1 (phosphorylated on 'Ser-345'), promoting its ubiquitination and degradation. Ubiquitination of CHEK1 is required to ensure that activated CHEK1 does not accumulate as cells progress through S phase, or when replication forks encounter transient impediments during normal DNA replication. The protein is F-box only protein 6 (FBXO6) of Bos taurus (Bovine).